The primary structure comprises 625 residues: Grainyhead-like protein 2 homolog (625 aa).

Disordered regions lie at residues 1–24 (MSQESDNNKRLVALVPMPSDPPFN), 82–112 (VSKASDSQEDQEKRNCLGTSEAQSNLSGGEN), and 428–453 (EERKQNRKKGKGQASQTQCNSSSDGK). The tract at residues 1-93 (MSQESDNNKR…KASDSQEDQE (93 aa)) is transcription activation. Polar residues-rich tracts occupy residues 98–109 (LGTSEAQSNLSG) and 440–451 (QASQTQCNSSSD). One can recognise a Grh/CP2 DB domain in the interval 244–482 (SSGTFQYTLE…DLHSQPVLFI (239 aa)).

Belongs to the grh/CP2 family. Grainyhead subfamily. As to quaternary structure, homodimer, also forms heterodimers with GRHL1 or GRHL3. As to expression, expressed in keratinocytes (at protein level). Highly expressed in placenta, prostate, brain and kidney. Lower-level expression in a variety of epithelial tissues such as thymus, lung, salivary gland, mammary gland and digestive tract. Expressed in the cochlear. Expressed in corneal epithelial cells, but not in the endothelium or stroma.

It is found in the nucleus. The protein localises to the membrane. In terms of biological role, transcription factor playing an important role in primary neurulation and in epithelial development. Binds directly to the consensus DNA sequence 5'-AACCGGTT-3' acting as an activator and repressor on distinct target genes. During embryogenesis, plays unique and cooperative roles with GRHL3 in establishing distinct zones of primary neurulation. Essential for closure 3 (rostral end of the forebrain), functions cooperatively with GRHL3 in closure 2 (forebrain/midbrain boundary) and posterior neuropore closure. Regulates epithelial morphogenesis acting as a target gene-associated transcriptional activator of apical junctional complex components. Up-regulates of CLDN3 and CLDN4, as well as of RAB25, which increases the CLDN4 protein and its localization at tight junctions. Comprises an essential component of the transcriptional machinery that establishes appropriate expression levels of CLDN4 and CDH1 in different types of epithelia. Exhibits functional redundancy with GRHL3 in epidermal morphogenetic events and epidermal wound repair. In lung, forms a regulatory loop with NKX2-1 that coordinates lung epithelial cell morphogenesis and differentiation. In keratinocytes, plays a role in telomerase activation during cellular proliferation, regulates TERT expression by binding to TERT promoter region and inhibiting DNA methylation at the 5'-CpG island, possibly by interfering with DNMT1 enzyme activity. In addition, impairs keratinocyte differentiation and epidermal function by inhibiting the expression of genes clustered at the epidermal differentiation complex (EDC) as well as GRHL1 and GRHL3 through epigenetic mechanisms. The polypeptide is Grainyhead-like protein 2 homolog (GRHL2) (Homo sapiens (Human)).